The chain runs to 2178 residues: DNA-directed RNA polymerase subunit beta (2178 aa).

3 insert regions span residues 269-325 (SKKI…TPFV), 714-1508 (KRID…LFYN), and 1703-1900 (KGND…LQPM).

The protein belongs to the RNA polymerase beta chain family. In plastids the minimal PEP RNA polymerase catalytic core is composed of four subunits: alpha, beta, beta', and beta''. When a (nuclear-encoded) sigma factor is associated with the core the holoenzyme is formed, which can initiate transcription.

The protein localises to the plastid. It is found in the chloroplast. The enzyme catalyses RNA(n) + a ribonucleoside 5'-triphosphate = RNA(n+1) + diphosphate. Its function is as follows. DNA-dependent RNA polymerase catalyzes the transcription of DNA into RNA using the four ribonucleoside triphosphates as substrates. The polypeptide is DNA-directed RNA polymerase subunit beta (Tupiella akineta (Green alga)).